Consider the following 427-residue polypeptide: Enolase (427 aa).

(2R)-2-phosphoglycerate is bound at residue glutamine 163. The Proton donor role is filled by glutamate 205. Positions 242, 285, and 312 each coordinate Mg(2+). Positions 337, 366, 367, and 388 each coordinate (2R)-2-phosphoglycerate. Lysine 337 serves as the catalytic Proton acceptor.

Belongs to the enolase family. The cofactor is Mg(2+).

Its subcellular location is the cytoplasm. The protein resides in the secreted. It is found in the cell surface. The catalysed reaction is (2R)-2-phosphoglycerate = phosphoenolpyruvate + H2O. Its pathway is carbohydrate degradation; glycolysis; pyruvate from D-glyceraldehyde 3-phosphate: step 4/5. Catalyzes the reversible conversion of 2-phosphoglycerate (2-PG) into phosphoenolpyruvate (PEP). It is essential for the degradation of carbohydrates via glycolysis. This is Enolase from Nitrobacter hamburgensis (strain DSM 10229 / NCIMB 13809 / X14).